An 89-amino-acid chain; its full sequence is Small ribosomal subunit protein uS14 (89 aa).

The protein belongs to the universal ribosomal protein uS14 family. In terms of assembly, part of the 30S ribosomal subunit. Contacts proteins S3 and S10.

Functionally, binds 16S rRNA, required for the assembly of 30S particles and may also be responsible for determining the conformation of the 16S rRNA at the A site. The sequence is that of Small ribosomal subunit protein uS14 from Akkermansia muciniphila (strain ATCC BAA-835 / DSM 22959 / JCM 33894 / BCRC 81048 / CCUG 64013 / CIP 107961 / Muc).